A 358-amino-acid polypeptide reads, in one-letter code: MNVTKGGLVLFSANSNASCVELAKRIAERLGVELGKVQVYQEPNRETRVQIQESVRGKDVFIIQTVSKDVNTTIMELLIMVYACRTSCAKTISGVIPYFPYSKQCKMRKRGSIVSKLLASMMCKAGLTHFITMDLHQKEIQGFFNIPVDNLRASPFLLQYIQEEIPDYRNAVIVAKSPSSAKRAQSFAERLRLGLAVIHGEAQDAESDMVDGRHSPPVVKNIGAAMHPSLEIPLMFPKEKPPITVVGDVGGRIAIIVDDIIDDVDSFVAAADTLKERGAYKIFVMATHGLLSSEAPRLIEESTIDEVVVTNTIPHEIQKLQCPKIKTVDISMILSEAIRRIHNGESMSYLFRNIGVDD.

This sequence belongs to the ribose-phosphate pyrophosphokinase family.

In terms of biological role, seems to play a negative regulatory role in 5-phosphoribose 1-diphosphate synthesis. This is Phosphoribosyl pyrophosphate synthase-associated protein 2 (prpsap2) from Xenopus tropicalis (Western clawed frog).